Consider the following 937-residue polypeptide: Putative leucine-rich repeat receptor-like serine/threonine-protein kinase At3g53590 (937 aa).

The first 20 residues, 1–20, serve as a signal peptide directing secretion; that stretch reads MIPPNINVLIRSICINLVTS. Over 21 to 547 the chain is Extracellular; the sequence is LPLNFAYIFI…LLAQTSGIRT (527 aa). Asn50, Asn63, Asn90, and Asn114 each carry an N-linked (GlcNAc...) asparagine glycan. 8 LRR repeats span residues 102–126, 127–150, 152–173, 174–198, 200–222, 223–249, 251–270, and 271–294; these read LLYL…IGRI, SSLK…LGNL, NLNR…SFGN, LRSI…LSKL, KLVH…LAQL, PSLT…HFSR, VKLS…LSRI, and ENLS…KLSD. N-linked (GlcNAc...) asparagine glycosylation is found at Asn162, Asn184, and Asn210. 2 N-linked (GlcNAc...) asparagine glycosylation sites follow: Asn272 and Asn295. LRR repeat units follow at residues 296-316, 317-341, and 343-360; these read MTTI…SFSD, LNSL…IWQD, and SFEN…NFSD. Residues Asn327, Asn357, Asn370, Asn413, Asn499, and Asn516 are each glycosylated (N-linked (GlcNAc...) asparagine). Residues 548–568 traverse the membrane as a helical segment; that stretch reads IVWMMIVAGSVVAATVLSVTA. The Cytoplasmic segment spans residues 569–937; sequence TLLYVRKRRE…SGFFHAVKPR (369 aa). The 273-residue stretch at 614–886 folds into the Protein kinase domain; that stretch reads FDSSTLIGRG…SKVVKELEGI (273 aa). Residues 620 to 628 and Lys642 each bind ATP; that span reads IGRGSYGKV. The Proton acceptor role is filled by Asp738.

The protein belongs to the protein kinase superfamily. Ser/Thr protein kinase family.

It localises to the cell membrane. The enzyme catalyses L-seryl-[protein] + ATP = O-phospho-L-seryl-[protein] + ADP + H(+). The catalysed reaction is L-threonyl-[protein] + ATP = O-phospho-L-threonyl-[protein] + ADP + H(+). In Arabidopsis thaliana (Mouse-ear cress), this protein is Putative leucine-rich repeat receptor-like serine/threonine-protein kinase At3g53590.